A 132-amino-acid polypeptide reads, in one-letter code: Protein NrdI (132 aa).

It belongs to the NrdI family.

In terms of biological role, probably involved in ribonucleotide reductase function. This Agrobacterium fabrum (strain C58 / ATCC 33970) (Agrobacterium tumefaciens (strain C58)) protein is Protein NrdI.